We begin with the raw amino-acid sequence, 918 residues long: Serine/threonine-protein kinase D1 (918 aa).

Phosphotyrosine is present on Tyr-93. Residues 144–194 (PHALFVHSYRAPAFCDHCGEMLWGLVRQGLKCEGCGLNYHKRCAFKIPNNC) form a Phorbol-ester/DAG-type 1 zinc finger. 4 positions are modified to phosphoserine: Ser-203, Ser-206, Ser-217, and Ser-221. The Phorbol-ester/DAG-type 2 zinc finger occupies 276-326 (PHTFVIHSYTRPTVCQFCKKLLKGLFRQGLQCKDCRFNCHKRCAPKVPNNC). Disordered stretches follow at residues 338-362 (SPGA…NSGL) and 379-410 (AEGQ…SNNI). Positions 345 to 355 (VVMEEGSDDND) are enriched in acidic residues. The residue at position 351 (Ser-351) is a Phosphoserine. Residues 400 to 410 (RTISPSTSNNI) are compositionally biased toward polar residues. 2 positions are modified to phosphoserine; by MAPK13: Ser-403 and Ser-407. One can recognise a PH domain in the interval 428–547 (TVMKEGWMVH…WEVAIQHALM (120 aa)). The residue at position 438 (Tyr-438) is a Phosphotyrosine. The residue at position 454 (Ser-454) is a Phosphoserine. Tyr-469 carries the phosphotyrosine; by ABL modification. Residue Tyr-508 is modified to Phosphotyrosine. Ser-554 is subject to Phosphoserine. The region spanning 589-845 (IFPDEVLGSG…VDKTLSHPWL (257 aa)) is the Protein kinase domain. Residues 595–603 (LGSGQFGIV) and Lys-618 contribute to the ATP site. Residue Asp-712 is the Proton acceptor of the active site. Residue Ser-744 is modified to Phosphoserine; by PKC/PRKCD. Ser-748 bears the Phosphoserine; by autocatalysis and PKC/PRKCD mark. Tyr-755 is modified (phosphotyrosine). Residue Ser-916 is modified to Phosphoserine; by autocatalysis.

Belongs to the protein kinase superfamily. CAMK Ser/Thr protein kinase family. PKD subfamily. Interacts (via N-terminus) with ADAP1/CENTA1. Interacts with MAPK13. Interacts with DAPK1 in an oxidative stress-regulated manner. Interacts with USP28; the interaction induces phosphorylation of USP28 and activated KRAS-mediated stabilization of ZNF304. Interacts with AKAP13 (via C-terminal domain). Requires Mg(2+) as cofactor. In terms of processing, phosphorylated at Ser-403 and Ser-407 by MAPK13 during regulation of insulin secretion in pancreatic beta cells. Phosphorylated by DAPK1. Phosphorylated at Tyr-93 and by ABL at Tyr-469, which primes the kinase in response to oxidative stress, and promotes a second step activating phosphorylation at Ser-744/Ser-748 by PKRD. Phosphorylated at Ser-916 upon S.enterica infection in macrophages.

It is found in the cytoplasm. It localises to the cell membrane. Its subcellular location is the golgi apparatus. The protein resides in the trans-Golgi network. It carries out the reaction L-seryl-[protein] + ATP = O-phospho-L-seryl-[protein] + ADP + H(+). It catalyses the reaction L-threonyl-[protein] + ATP = O-phospho-L-threonyl-[protein] + ADP + H(+). With respect to regulation, activated by DAG and phorbol esters. Phorbol-ester/DAG-type domain 1 binds DAG with high affinity and appears to play the dominant role in mediating translocation to the cell membrane and trans-Golgi network. Phorbol-ester/DAG-type domain 2 binds phorbol ester with higher affinity. Autophosphorylation of Ser-748 and phosphorylation of Ser-744 by PKC relieves auto-inhibition by the PH domain. Phosphorylation on Tyr-469 by the SRC-ABL1 pathway in response to oxidative stress, is also required for activation. Activated by DAPK1 under oxidative stress. Serine/threonine-protein kinase that converts transient diacylglycerol (DAG) signals into prolonged physiological effects downstream of PKC, and is involved in the regulation of MAPK8/JNK1 and Ras signaling, Golgi membrane integrity and trafficking, cell survival through NF-kappa-B activation, cell migration, cell differentiation by mediating HDAC7 nuclear export, cell proliferation via MAPK1/3 (ERK1/2) signaling, and plays a role in cardiac hypertrophy, VEGFA-induced angiogenesis, genotoxic-induced apoptosis and flagellin-stimulated inflammatory response. Phosphorylates the epidermal growth factor receptor (EGFR) on dual threonine residues, which leads to the suppression of epidermal growth factor (EGF)-induced MAPK8/JNK1 activation and subsequent JUN phosphorylation. Phosphorylates RIN1, inducing RIN1 binding to 14-3-3 proteins YWHAB, YWHAE and YWHAZ and increased competition with RAF1 for binding to GTP-bound form of Ras proteins (NRAS, HRAS and KRAS). Acts downstream of the heterotrimeric G-protein beta/gamma-subunit complex to maintain the structural integrity of the Golgi membranes, and is required for protein transport along the secretory pathway. In the trans-Golgi network (TGN), regulates the fission of transport vesicles that are on their way to the plasma membrane. May act by activating the lipid kinase phosphatidylinositol 4-kinase beta (PI4KB) at the TGN for the local synthesis of phosphorylated inositol lipids, which induces a sequential production of DAG, phosphatidic acid (PA) and lyso-PA (LPA) that are necessary for membrane fission and generation of specific transport carriers to the cell surface. Under oxidative stress, is phosphorylated at Tyr-469 via SRC-ABL1 and contributes to cell survival by activating IKK complex and subsequent nuclear translocation and activation of NFKB1. Involved in cell migration by regulating integrin alpha-5/beta-3 recycling and promoting its recruitment in newly forming focal adhesion. In osteoblast differentiation, mediates the bone morphogenetic protein 2 (BMP2)-induced nuclear export of HDAC7, which results in the inhibition of HDAC7 transcriptional repression of RUNX2. In neurons, plays an important role in neuronal polarity by regulating the biogenesis of TGN-derived dendritic vesicles, and is involved in the maintenance of dendritic arborization and Golgi structure in hippocampal cells. May potentiate mitogenesis induced by the neuropeptide bombesin or vasopressin by mediating an increase in the duration of MAPK1/3 (ERK1/2) signaling, which leads to accumulation of immediate-early gene products including FOS that stimulate cell cycle progression. Plays an important role in the proliferative response induced by low calcium in keratinocytes, through sustained activation of MAPK1/3 (ERK1/2) pathway. Downstream of novel PKC signaling, plays a role in cardiac hypertrophy by phosphorylating HDAC5, which in turn triggers XPO1/CRM1-dependent nuclear export of HDAC5, MEF2A transcriptional activation and induction of downstream target genes that promote myocyte hypertrophy and pathological cardiac remodeling. Mediates cardiac troponin I (TNNI3) phosphorylation at the PKA sites, which results in reduced myofilament calcium sensitivity, and accelerated crossbridge cycling kinetics. The PRKD1-HDAC5 pathway is also involved in angiogenesis by mediating VEGFA-induced specific subset of gene expression, cell migration, and tube formation. In response to VEGFA, is necessary and required for HDAC7 phosphorylation which induces HDAC7 nuclear export and endothelial cell proliferation and migration. During apoptosis induced by cytarabine and other genotoxic agents, PRKD1 is cleaved by caspase-3 at Asp-378, resulting in activation of its kinase function and increased sensitivity of cells to the cytotoxic effects of genotoxic agents. In epithelial cells, is required for transducing flagellin-stimulated inflammatory responses by binding and phosphorylating TLR5, which contributes to MAPK14/p38 activation and production of inflammatory cytokines. Acts as an activator of NLRP3 inflammasome assembly by mediating phosphorylation of NLRP3. May play a role in inflammatory response by mediating activation of NF-kappa-B. May be involved in pain transmission by directly modulating TRPV1 receptor. Plays a role in activated KRAS-mediated stabilization of ZNF304 in colorectal cancer (CRC) cells. Regulates nuclear translocation of transcription factor TFEB in macrophages upon live S.enterica infection. The protein is Serine/threonine-protein kinase D1 (Prkd1) of Mus musculus (Mouse).